Reading from the N-terminus, the 439-residue chain is Argininosuccinate lyase (439 aa).

Belongs to the lyase 1 family. Argininosuccinate lyase subfamily.

It is found in the cytoplasm. It catalyses the reaction 2-(N(omega)-L-arginino)succinate = fumarate + L-arginine. It participates in amino-acid biosynthesis; L-arginine biosynthesis; L-arginine from L-ornithine and carbamoyl phosphate: step 3/3. In Caldanaerobacter subterraneus subsp. tengcongensis (strain DSM 15242 / JCM 11007 / NBRC 100824 / MB4) (Thermoanaerobacter tengcongensis), this protein is Argininosuccinate lyase.